Here is a 119-residue protein sequence, read N- to C-terminus: Large ribosomal subunit protein uL18 (119 aa).

It belongs to the universal ribosomal protein uL18 family. As to quaternary structure, part of the 50S ribosomal subunit; part of the 5S rRNA/L5/L18/L25 subcomplex. Contacts the 5S and 23S rRNAs.

This is one of the proteins that bind and probably mediate the attachment of the 5S RNA into the large ribosomal subunit, where it forms part of the central protuberance. The chain is Large ribosomal subunit protein uL18 from Anaeromyxobacter sp. (strain Fw109-5).